Here is a 122-residue protein sequence, read N- to C-terminus: MSSLAQKKTARLKRQIRVRKKIRGTAERPRLNVFKTAKHIYAQLIDDTCGATLAAASTLLDEVSTGLSYTGNIEAAQKVGAAIAQKALAKEINMVVFDRNGFLYHGRIKALAEAARENGLSF.

Belongs to the universal ribosomal protein uL18 family. Part of the 50S ribosomal subunit; part of the 5S rRNA/L5/L18/L25 subcomplex. Contacts the 5S and 23S rRNAs.

Its function is as follows. This is one of the proteins that bind and probably mediate the attachment of the 5S RNA into the large ribosomal subunit, where it forms part of the central protuberance. The sequence is that of Large ribosomal subunit protein uL18 from Geotalea uraniireducens (strain Rf4) (Geobacter uraniireducens).